We begin with the raw amino-acid sequence, 258 residues long: Exosome complex component Rrp41 (258 aa).

Belongs to the RNase PH family. Rrp41 subfamily. In terms of assembly, component of the archaeal exosome complex. Forms a hexameric ring-like arrangement composed of 3 Rrp41-Rrp42 heterodimers. The hexameric ring associates with a trimer of Rrp4 and/or Csl4 subunits.

It is found in the cytoplasm. Its function is as follows. Catalytic component of the exosome, which is a complex involved in RNA degradation. Has 3'-&gt;5' exoribonuclease activity. Can also synthesize heteromeric RNA-tails. This chain is Exosome complex component Rrp41, found in Archaeoglobus fulgidus (strain ATCC 49558 / DSM 4304 / JCM 9628 / NBRC 100126 / VC-16).